We begin with the raw amino-acid sequence, 167 residues long: Protein archease (167 aa).

Residue Ala-2 is modified to N-acetylalanine. Positions 39, 166, and 167 each coordinate Ca(2+).

The protein belongs to the archease family. As to quaternary structure, component of the tRNA-splicing ligase complex.

In terms of biological role, component of the tRNA-splicing ligase complex required to facilitate the enzymatic turnover of catalytic subunit RTCB. Together with DDX1, acts by facilitating the guanylylation of RTCB, a key intermediate step in tRNA ligation. This chain is Protein archease (ZBTB8OS), found in Bos taurus (Bovine).